The primary structure comprises 90 residues: MEKSRCHAVAHGGGCAGSAKSHKSGGRCGQGRGAGDSHGTRGAGRRYRAASAPHPLAVGAHLRDELAKRSADPRLTDELNDLAGHTLDDL.

Residues 1 to 56 (MEKSRCHAVAHGGGCAGSAKSHKSGGRCGQGRGAGDSHGTRGAGRRYRAASAPHPL) are disordered. Residues 26 to 36 (GRCGQGRGAGD) show a composition bias toward gly residues.

Functionally, antitoxin component of a possible type II toxin-antitoxin (TA) system. The cognate toxin is VapC8. The protein is Putative antitoxin VapB8 (vapB8) of Mycobacterium tuberculosis (strain ATCC 25618 / H37Rv).